The sequence spans 208 residues: 3-demethoxyubiquinol 3-hydroxylase (208 aa).

Glu57, Glu87, His90, Glu139, Glu171, and His174 together coordinate Fe cation.

It belongs to the COQ7 family. The cofactor is Fe cation.

The protein resides in the cell membrane. It carries out the reaction a 5-methoxy-2-methyl-3-(all-trans-polyprenyl)benzene-1,4-diol + AH2 + O2 = a 3-demethylubiquinol + A + H2O. Its pathway is cofactor biosynthesis; ubiquinone biosynthesis. In terms of biological role, catalyzes the hydroxylation of 2-nonaprenyl-3-methyl-6-methoxy-1,4-benzoquinol during ubiquinone biosynthesis. This is 3-demethoxyubiquinol 3-hydroxylase from Burkholderia ambifaria (strain ATCC BAA-244 / DSM 16087 / CCUG 44356 / LMG 19182 / AMMD) (Burkholderia cepacia (strain AMMD)).